The sequence spans 105 residues: MSKQKELFANEEIAQAEKTKLQPPPMYKVVLNNDDYTPMEFVVEVLQKFFGMDLDKATQVMLSVHYSGKGVCGTFTAEIAETKVVQVNTYSRNNEHPLLCTMEKA.

Belongs to the ClpS family. As to quaternary structure, binds to the N-terminal domain of the chaperone ClpA.

Functionally, involved in the modulation of the specificity of the ClpAP-mediated ATP-dependent protein degradation. This chain is ATP-dependent Clp protease adapter protein ClpS, found in Aeromonas salmonicida (strain A449).